Consider the following 337-residue polypeptide: MIEADRLIEPIASVEDERVDRAIRPKMLQDYTGQQHVKAQMEIFIPAAKNRGEPLDHLLIFGPPGLGKTTLANIVANEMGVNIRTTSGPVLEKAGDLAALLTNLEENDILFIDEIHRLSAVVEEILYPAMEDYQLDIMIGEGPAARSIKLDLPPFTLIGATTRAGALTSPLRDRFGIVQRLEFYNVADLSTIVSRSAHFLNLTIDEEGAFEVARRSRGTPRIANRLLRRVRDYADIKSHGVVNQQTAAAALDMLEVDSEGFDIMDRKLLHAIIDKFMGGPVGLDNVAAAIGEERETIEDVIEPFLIQQGFLQRTPRGRIATDRAYQHFGITKDQTKD.

Positions 4–184 (ADRLIEPIAS…FGIVQRLEFY (181 aa)) are large ATPase domain (RuvB-L). ATP-binding positions include isoleucine 23, arginine 24, glycine 65, lysine 68, threonine 69, threonine 70, 131–133 (EDY), arginine 174, tyrosine 184, and arginine 221. Mg(2+) is bound at residue threonine 69. A small ATPAse domain (RuvB-S) region spans residues 185–255 (NVADLSTIVS…TAAAALDMLE (71 aa)). Residues 258–337 (SEGFDIMDRK…FGITKDQTKD (80 aa)) are head domain (RuvB-H). The DNA site is built by arginine 294, arginine 313, and arginine 318.

The protein belongs to the RuvB family. Homohexamer. Forms an RuvA(8)-RuvB(12)-Holliday junction (HJ) complex. HJ DNA is sandwiched between 2 RuvA tetramers; dsDNA enters through RuvA and exits via RuvB. An RuvB hexamer assembles on each DNA strand where it exits the tetramer. Each RuvB hexamer is contacted by two RuvA subunits (via domain III) on 2 adjacent RuvB subunits; this complex drives branch migration. In the full resolvosome a probable DNA-RuvA(4)-RuvB(12)-RuvC(2) complex forms which resolves the HJ.

The protein localises to the cytoplasm. The catalysed reaction is ATP + H2O = ADP + phosphate + H(+). Functionally, the RuvA-RuvB-RuvC complex processes Holliday junction (HJ) DNA during genetic recombination and DNA repair, while the RuvA-RuvB complex plays an important role in the rescue of blocked DNA replication forks via replication fork reversal (RFR). RuvA specifically binds to HJ cruciform DNA, conferring on it an open structure. The RuvB hexamer acts as an ATP-dependent pump, pulling dsDNA into and through the RuvAB complex. RuvB forms 2 homohexamers on either side of HJ DNA bound by 1 or 2 RuvA tetramers; 4 subunits per hexamer contact DNA at a time. Coordinated motions by a converter formed by DNA-disengaged RuvB subunits stimulates ATP hydrolysis and nucleotide exchange. Immobilization of the converter enables RuvB to convert the ATP-contained energy into a lever motion, pulling 2 nucleotides of DNA out of the RuvA tetramer per ATP hydrolyzed, thus driving DNA branch migration. The RuvB motors rotate together with the DNA substrate, which together with the progressing nucleotide cycle form the mechanistic basis for DNA recombination by continuous HJ branch migration. Branch migration allows RuvC to scan DNA until it finds its consensus sequence, where it cleaves and resolves cruciform DNA. The protein is Holliday junction branch migration complex subunit RuvB of Colwellia psychrerythraea (strain 34H / ATCC BAA-681) (Vibrio psychroerythus).